The chain runs to 582 residues: mRNA-decapping enzyme 1A (582 aa).

Ser-62 bears the Phosphoserine mark. Over residues 132–141 (RSQQAARDKQ) the composition is skewed to basic and acidic residues. 2 disordered regions span residues 132–154 (RSQQAARDKQSPSQANGCSDHRP) and 172–214 (QMGD…PSGH). A phosphoserine mark is found at Ser-142, Ser-179, Ser-180, Ser-315, Ser-319, and Ser-334. Residues 173–196 (MGDSNISSPGLQPSTQLSNLGSTE) show a composition bias toward polar residues. Phosphothreonine is present on Thr-348. Position 353 is a phosphoserine (Ser-353). The residue at position 376 (Arg-376) is an Asymmetric dimethylarginine. Thr-401 is modified (phosphothreonine). Residues Ser-422, Ser-522, Ser-523, and Ser-525 each carry the phosphoserine modification. A disordered region spans residues 513-536 (RSSDLERKASSPSPLTIGTPESQR). Over residues 522–533 (SSPSPLTIGTPE) the composition is skewed to polar residues. Phosphothreonine is present on residues Thr-528 and Thr-531.

The protein belongs to the DCP1 family. (Microbial infection) Interacts with rotavirus A non-structural protein 2; this interaction probably plays a role in the sequestration of DCP1A in viral factories. Interacts with rotavirus A non-structural protein 5; this interaction probably plays a role in its sequestration in viral factories. As to quaternary structure, forms a complex with EDC3, DCP2, DDX6 and EDC4/HEDLS, within this complex directly interacts with EDC3. Part of a cytoplasmic complex containing proteins involved in mRNA decay, including XRN1 and LSM1. Interacts with DCP1B. Interacts with DCP2. Interacts with DDX17 in an RNA-independent manner. Interacts with PNRC2. Interacts with SMAD4. Interacts with UPF1. Interacts with ZC3HAV1. Interacts with ZFP36L1. Interacts with NBDY. Interacts with DHX34; the interaction is RNA-independent. In terms of tissue distribution, detected in heart, brain, placenta, lung, skeletal muscle, liver, kidney and pancreas.

Its subcellular location is the cytoplasm. The protein resides in the P-body. It is found in the nucleus. The catalysed reaction is a 5'-end (N(7)-methyl 5'-triphosphoguanosine)-ribonucleoside in mRNA + H2O = N(7)-methyl-GDP + a 5'-end phospho-ribonucleoside in mRNA + 2 H(+). Functionally, necessary for the degradation of mRNAs, both in normal mRNA turnover and in nonsense-mediated mRNA decay. Removes the 7-methyl guanine cap structure from mRNA molecules, yielding a 5'-phosphorylated mRNA fragment and 7m-GDP. Contributes to the transactivation of target genes after stimulation by TGFB1. Essential for embryonic development. The chain is mRNA-decapping enzyme 1A (DCP1A) from Homo sapiens (Human).